Consider the following 229-residue polypeptide: MEFIIISVGNEILSGDITNTNAAYMAKKLTRAGHKVKKIITIPDDVNIIAEEVRKASKEADFVLVTGGLGATHDDVTAEGIARAFNRKLVISKEVYEWLSKLSKNEEAVRKISSVPEGSEIVWNDVGAAPAFIVENVAVMPGVPAEMENTFEKILERFEKGEYHEEVVKVNGFEVKIVDKLNQVVRDNPDVEIGSYPKPGYVMVKFSGRDKEKVKKAVKQFEELLNDKR.

The protein belongs to the CinA family.

The sequence is that of Protein AF_2251 from Archaeoglobus fulgidus (strain ATCC 49558 / DSM 4304 / JCM 9628 / NBRC 100126 / VC-16).